Here is a 368-residue protein sequence, read N- to C-terminus: Glutamate 5-kinase (368 aa).

Lys13 serves as a coordination point for ATP. Substrate contacts are provided by Ser54, Asp141, and Asn153. Residue 173–174 participates in ATP binding; the sequence is SD. A PUA domain is found at 278 to 355; sequence RGVITVDEGA…DEIEAILGYA (78 aa).

This sequence belongs to the glutamate 5-kinase family.

It is found in the cytoplasm. It catalyses the reaction L-glutamate + ATP = L-glutamyl 5-phosphate + ADP. It functions in the pathway amino-acid biosynthesis; L-proline biosynthesis; L-glutamate 5-semialdehyde from L-glutamate: step 1/2. Catalyzes the transfer of a phosphate group to glutamate to form L-glutamate 5-phosphate. In Ruegeria sp. (strain TM1040) (Silicibacter sp.), this protein is Glutamate 5-kinase.